A 199-amino-acid chain; its full sequence is Recombination protein RecR (199 aa).

The segment at 58-73 adopts a C4-type zinc-finger fold; it reads CKVCTNLTDQEVCNIC. Residues 81–176 form the Toprim domain; that stretch reads LLICVVEDPR…KVSRIAHGIP (96 aa).

Belongs to the RecR family.

Its function is as follows. May play a role in DNA repair. It seems to be involved in an RecBC-independent recombinational process of DNA repair. It may act with RecF and RecO. This chain is Recombination protein RecR, found in Alkaliphilus oremlandii (strain OhILAs) (Clostridium oremlandii (strain OhILAs)).